The primary structure comprises 615 residues: ATP-dependent RNA helicase mrh4, mitochondrial (615 aa).

A mitochondrion-targeting transit peptide spans methionine 1–proline 37. Residues valine 21–arginine 108 form a disordered region. Residues glutamine 90–arginine 108 show a composition bias toward basic and acidic residues. The short motif at glutamine 138–arginine 171 is the Q motif element. The Helicase ATP-binding domain maps to arginine 184–leucine 395. Residue alanine 197–threonine 204 coordinates ATP. A DEAD box motif is present at residues aspartate 342–aspartate 345. A Helicase C-terminal domain is found at proline 444 to isoleucine 615.

The protein belongs to the DEAD box helicase family. MRH4 subfamily.

It localises to the mitochondrion. The enzyme catalyses ATP + H2O = ADP + phosphate + H(+). In terms of biological role, ATP-binding RNA helicase involved in mitochondrial RNA metabolism. Required for maintenance of mitochondrial DNA. The chain is ATP-dependent RNA helicase mrh4, mitochondrial (mrh4) from Sclerotinia sclerotiorum (strain ATCC 18683 / 1980 / Ss-1) (White mold).